The chain runs to 207 residues: Ras-related protein Rab-8B (207 aa).

Positions 17, 18, 19, 20, 21, 22, 23, 35, 39, and 40 each coordinate GTP. Threonine 22 is a Mg(2+) binding site. Short sequence motifs (switch) lie at residues 31 to 45 and 63 to 80; these read DAFN…GIDF and DTAG…YYRG. Mg(2+) contacts are provided by threonine 40 and aspartate 63. Glycine 66 provides a ligand contact to GTP. Threonine 72 carries the phosphothreonine modification. Residues asparagine 121, lysine 122, aspartate 124, alanine 152, and lysine 153 each contribute to the GTP site. Phosphoserine occurs at positions 180 and 183. Cysteine 204 carries the post-translational modification Cysteine methyl ester. Residue cysteine 204 is the site of S-geranylgeranyl cysteine attachment. Positions 205–207 are cleaved as a propeptide — removed in mature form; the sequence is LLL.

Belongs to the small GTPase superfamily. Rab family. In terms of assembly, associated with actin, delta-catenin and alpha and beta tubulins. Interacts with OTOF. Interacts with PEX5R. Interacts with RAB3IP. Interacts with VIM. Interacts with CDH1. Interacts with MICALL2. Interacts with GDI1, GDI2, CHML and CHM; phosphorylation at Thr-72 disrupts these interactions. Interacts with MICAL1. Mg(2+) is required as a cofactor. In terms of processing, phosphorylation of Thr-72 in the switch II region by LRRK2 prevents the association of RAB regulatory proteins, including CHM, CHML and RAB GDP dissociation inhibitors GDI1 and GDI2.

Its subcellular location is the cell membrane. The protein localises to the cytoplasmic vesicle. The protein resides in the phagosome membrane. It is found in the endosome membrane. It carries out the reaction GTP + H2O = GDP + phosphate + H(+). Regulated by guanine nucleotide exchange factors (GEFs) including RAB3IP/RABIN8 which promotes the exchange of bound GDP for free GTP. Regulated by GTPase activating proteins (GAPs) which increase the GTP hydrolysis activity. Inhibited by GDP dissociation inhibitors (GDIs). The small GTPases Rab are key regulators of intracellular membrane trafficking, from the formation of transport vesicles to their fusion with membranes. Rabs cycle between an inactive GDP-bound form and an active GTP-bound form that is able to recruit to membranes different sets of downstream effectors directly responsible for vesicle formation, movement, tethering and fusion. RAB8B may be involved in polarized vesicular trafficking and neurotransmitter release. May participate in cell junction dynamics in Sertoli cells. May also participate in the export of a subset of neosynthesized proteins through a Rab8-Rab10-Rab11-dependent endososomal export route. The polypeptide is Ras-related protein Rab-8B (RAB8B) (Bos taurus (Bovine)).